The sequence spans 450 residues: Signal recognition particle 54 kDa protein (450 aa).

Residues 107–114 (GIQGSGKT), 188–192 (DTAGR), and 247–250 (TKLD) each bind GTP.

It belongs to the GTP-binding SRP family. SRP54 subfamily. As to quaternary structure, part of the signal recognition particle protein translocation system, which is composed of SRP and FtsY. Archaeal SRP consists of a 7S RNA molecule of 300 nucleotides and two protein subunits: SRP54 and SRP19.

The protein resides in the cytoplasm. It carries out the reaction GTP + H2O = GDP + phosphate + H(+). Functionally, involved in targeting and insertion of nascent membrane proteins into the cytoplasmic membrane. Binds to the hydrophobic signal sequence of the ribosome-nascent chain (RNC) as it emerges from the ribosomes. The SRP-RNC complex is then targeted to the cytoplasmic membrane where it interacts with the SRP receptor FtsY. This Methanococcus maripaludis (strain DSM 14266 / JCM 13030 / NBRC 101832 / S2 / LL) protein is Signal recognition particle 54 kDa protein.